The following is a 500-amino-acid chain: L-aspartate semialdehyde sulfurtransferase (500 aa).

Catalysis depends on cysteine 131, which acts as the Cysteine persulfide intermediate. 2 consecutive CBS domains span residues 384-441 and 446-500; these read MADF…IFDS and MTKK…ARRY.

Belongs to the L-aspartate semialdehyde sulfurtransferase family. As to quaternary structure, forms homodimers. May form a complex with MA_1822.

It catalyses the reaction L-aspartate 4-semialdehyde + reduced 2[4Fe-4S]-[ferredoxin] + hydrogen sulfide + 3 H(+) = oxidized 2[4Fe-4S]-[ferredoxin] + L-homocysteine + H2O. The protein operates within amino-acid biosynthesis. In terms of biological role, required for O-acetylhomoserine sulfhydrylase (OAHS)-independent homocysteine (Hcy) biosynthesis. Together with MA_1822, catalyzes the condensation of sulfide with aspartate semialdehyde to generate homocysteine. Likely functions through persulfide intermediate. The chain is L-aspartate semialdehyde sulfurtransferase from Methanosarcina acetivorans (strain ATCC 35395 / DSM 2834 / JCM 12185 / C2A).